We begin with the raw amino-acid sequence, 1925 residues long: Plexin-D1 (1925 aa).

The span at 1–21 (MARRAAGGAPPSARAAAAVPL) shows a compositional bias: low complexity. The disordered stretch occupies residues 1–26 (MARRAAGGAPPSARAAAAVPLRPRPH). The first 48 residues, 1–48 (MARRAAGGAPPSARAAAAVPLRPRPHSRGPGLLPLPLLLLLGAARAGA), serve as a signal peptide directing secretion. The region spanning 49-548 (LEIQRRFPSP…TSHQMARVKV (500 aa)) is the Sema domain. The Extracellular portion of the chain corresponds to 49–1271 (LEIQRRFPSP…TLQLGGSETA (1223 aa)). 2 disulfide bridges follow: Cys-106/Cys-116 and Cys-142/Cys-150. N-linked (GlcNAc...) asparagine glycosylation is found at Asn-157 and Asn-226. Cystine bridges form between Cys-324/Cys-447 and Cys-347/Cys-391. Asn-483 is a glycosylation site (N-linked (GlcNAc...) asparagine). Disulfide bonds link Cys-551–Cys-568, Cys-557–Cys-602, Cys-560–Cys-577, Cys-571–Cys-583, and Cys-639–Cys-663. 3 consecutive IPT/TIG domains span residues 893–977 (PEIR…SREQ), 983–1065 (PTVH…NLTF), and 1071–1145 (PVIT…FING). Asn-967 is a glycosylation site (N-linked (GlcNAc...) asparagine). An N-linked (GlcNAc...) asparagine glycan is attached at Asn-1120. A helical membrane pass occupies residues 1272 to 1292 (IVVSIVICSVLLLLSVVALFV). Topologically, residues 1293 to 1925 (FCTKSRRAER…NNIYECYSEA (633 aa)) are cytoplasmic.

The protein belongs to the plexin family. In terms of assembly, interacts with NRP1 and SEMA4A. Interacts with SH3BP1; they dissociate upon SEMA3E binding to PLXND1 allowing SH3BP1 to transduce downstream signal through RAC1 inactivation. Detected in embryonic heart and vascular endothelium, brain, dorsal root ganglia, adrenal gland, lung mesenchyme, small intestine and in the ossification centers of vertebral bodies.

It is found in the cell membrane. The protein localises to the cell projection. The protein resides in the lamellipodium membrane. In terms of biological role, cell surface receptor for SEMA4A and for class 3 semaphorins, such as SEMA3A, SEMA3C and SEMA3E. Plays an important role in cell-cell signaling, and in regulating the migration of a wide spectrum of cell types. Regulates the migration of thymocytes in the medulla. Regulates endothelial cell migration. Plays an important role in ensuring the specificity of synapse formation. Mediates anti-angiogenic signaling in response to SEMA3E. Required for normal development of the heart and vasculature. The sequence is that of Plexin-D1 (Plxnd1) from Mus musculus (Mouse).